A 245-amino-acid chain; its full sequence is Probable phosphatase KPN78578_10290 (245 aa).

Histidine 7, histidine 9, histidine 15, histidine 40, glutamate 73, histidine 101, histidine 131, aspartate 192, and histidine 194 together coordinate Zn(2+).

It belongs to the PHP family. In terms of assembly, homotrimer. Zn(2+) is required as a cofactor.

The protein is Probable phosphatase KPN78578_10290 of Klebsiella pneumoniae subsp. pneumoniae (strain ATCC 700721 / MGH 78578).